The following is a 53-amino-acid chain: VENIVIGHMEVVACADSRVSFNLVLTPAETVAYGNLPFDQQLVLCEIITHPNF.

The sequence is that of Unknown protein from 2D-PAGE of needles from Pinus pinaster (Maritime pine).